Reading from the N-terminus, the 1051-residue chain is Protein transport protein Sec16B (1051 aa).

Positions 1 to 23 (MEPWVPQTQGRTTGPSRDTNRGL) are enriched in polar residues. Positions 1–109 (MEPWVPQTQG…PYQRYHTPTP (109 aa)) are disordered. Residues 39 to 63 (DKYHQWQDAHKNSKSQQDLRDDHQQ) show a composition bias toward basic and acidic residues. Residues 64 to 77 (SHSVSRSGEWSQPV) are compositionally biased toward polar residues. Residues serine 70 and serine 137 each carry the phosphoserine modification. A disordered region spans residues 157–203 (EKHNGTFGANSDTQFQFTSKNPYRDSPASVSGQEQPGEFFPESEAQK). A compositionally biased stretch (polar residues) spans 163–177 (FGANSDTQFQFTSKN). Serine 182, serine 185, and serine 245 each carry phosphoserine. The central conserved domain (CCD); required for localization to endoplasmic reticulum exit sites stretch occupies residues 263-708 (APMRFYVPHV…KHKDLEQNRT (446 aa)). Over residues 703–715 (LEQNRTGAPRDPD) the composition is skewed to basic and acidic residues. 3 disordered regions span residues 703-754 (LEQN…LWST), 798-820 (SGAS…EDML), and 850-1051 (TPAA…TQPC). Polar residues predominate over residues 737–754 (GHQNYSEDSEYSSTLWST). Residues 798–809 (SGASGSSVAVTG) are compositionally biased toward low complexity. At threonine 850 the chain carries Phosphothreonine. Residues serine 860, serine 863, serine 866, serine 874, and serine 875 each carry the phosphoserine modification. Basic and acidic residues predominate over residues 877–897 (GADKPSHPDASQKGKLGDGKN). Positions 900–920 (SSGFGWFSWFRSKPASSVSTS) are enriched in low complexity. The segment covering 921–932 (GDEDSSDSSDSE) has biased composition (acidic residues). Low complexity predominate over residues 936-947 (RASSPHHASPGL). The segment covering 984 to 993 (EGMGIGGFSG) has biased composition (gly residues). Positions 1022–1037 (NPSQVPQLPTASSLNR) are enriched in polar residues.

Belongs to the SEC16 family. SEC16A and SEC16B are each present in multiple copies in a heteromeric complex. Interacts with TFG. Interacts with SEC13. As to expression, liver.

It is found in the endoplasmic reticulum membrane. The protein localises to the golgi apparatus membrane. Functionally, plays a role in the organization of the endoplasmic reticulum exit sites (ERES), also known as transitional endoplasmic reticulum (tER). Required for secretory cargo traffic from the endoplasmic reticulum to the Golgi apparatus. Involved in peroxisome biogenesis. Regulates the transport of peroxisomal biogenesis factors PEX3 and PEX16 from the ER to peroxisomes. In Mus musculus (Mouse), this protein is Protein transport protein Sec16B (Sec16b).